The chain runs to 437 residues: UDP-N-acetylmuramate--L-alanine ligase (437 aa).

108–114 (GAHGKTS) lines the ATP pocket.

It belongs to the MurCDEF family.

It is found in the cytoplasm. It carries out the reaction UDP-N-acetyl-alpha-D-muramate + L-alanine + ATP = UDP-N-acetyl-alpha-D-muramoyl-L-alanine + ADP + phosphate + H(+). It participates in cell wall biogenesis; peptidoglycan biosynthesis. In terms of biological role, cell wall formation. The polypeptide is UDP-N-acetylmuramate--L-alanine ligase (Staphylococcus aureus (strain MRSA252)).